A 269-amino-acid polypeptide reads, in one-letter code: MQEIIASVDHIKFDLEIAVEQQLGAQPLPFPGMDKSGAAVCEFFLKAACGKGGMCPFRHISGEKTVVCKHWLRGLCKKGDQCEFLHEYDMTKMPECYFYSKFGECSNKECPFLHIDPESKIKDCPWYDRGFCKHGPLCRHRHTRRVICVNYLVGFCPEGPSCKFMHPRFELPMGTTEQPPLPQQTQPPAKQSNNPPLQRSSSLIQLTSQNSSPNQQRTPQVIGVMQSQNSSAGNRGPRPLEQVTCYKCGEKGHYANRCTKGHLAFLSGQ.

C3H1-type zinc fingers lie at residues 35–61 (KSGA…RHIS), 62–89 (GEKT…HEYD), 90–117 (MTKM…HIDP), 118–142 (ESKI…RHRH), and 143–169 (TRRV…HPRF). The interval 173-199 (MGTTEQPPLPQQTQPPAKQSNNPPLQR) is disordered. 3 positions are modified to phosphoserine: S200, S202, and S212. A CCHC-type zinc finger spans residues 243–260 (VTCYKCGEKGHYANRCTK). Position 267 is a phosphoserine (S267).

This sequence belongs to the CPSF4/YTH1 family. Component of the cleavage and polyadenylation specificity factor (CPSF) complex, composed of CPSF1, CPSF2, CPSF3, CPSF4 and FIP1L1. Interacts with FIP1L1. As to quaternary structure, (Microbial infection) Interacts with influenza A virus NS1 blocks processing of pre-mRNAs, thereby preventing nuclear export of host cell mRNAs.

Its subcellular location is the nucleus. In terms of biological role, component of the cleavage and polyadenylation specificity factor (CPSF) complex that play a key role in pre-mRNA 3'-end formation, recognizing the AAUAAA signal sequence and interacting with poly(A) polymerase and other factors to bring about cleavage and poly(A) addition. CPSF4 binds RNA polymers with a preference for poly(U). This is Cleavage and polyadenylation specificity factor subunit 4 (CPSF4) from Homo sapiens (Human).